Consider the following 474-residue polypeptide: UDP-N-acetylmuramate--L-alanine ligase (474 aa).

Residue 119-125 (GTHGKTT) participates in ATP binding.

It belongs to the MurCDEF family.

It is found in the cytoplasm. The catalysed reaction is UDP-N-acetyl-alpha-D-muramate + L-alanine + ATP = UDP-N-acetyl-alpha-D-muramoyl-L-alanine + ADP + phosphate + H(+). It functions in the pathway cell wall biogenesis; peptidoglycan biosynthesis. Cell wall formation. This chain is UDP-N-acetylmuramate--L-alanine ligase, found in Jannaschia sp. (strain CCS1).